A 181-amino-acid chain; its full sequence is ATP synthase subunit b (181 aa).

A helical transmembrane segment spans residues 24–44; that stretch reads LFPNLPNFIAHLLATIILVIV.

This sequence belongs to the ATPase B chain family. As to quaternary structure, F-type ATPases have 2 components, F(1) - the catalytic core - and F(0) - the membrane proton channel. F(1) has five subunits: alpha(3), beta(3), gamma(1), delta(1), epsilon(1). F(0) has three main subunits: a(1), b(2) and c(10-14). The alpha and beta chains form an alternating ring which encloses part of the gamma chain. F(1) is attached to F(0) by a central stalk formed by the gamma and epsilon chains, while a peripheral stalk is formed by the delta and b chains.

The protein localises to the cell membrane. In terms of biological role, f(1)F(0) ATP synthase produces ATP from ADP in the presence of a proton or sodium gradient. F-type ATPases consist of two structural domains, F(1) containing the extramembraneous catalytic core and F(0) containing the membrane proton channel, linked together by a central stalk and a peripheral stalk. During catalysis, ATP synthesis in the catalytic domain of F(1) is coupled via a rotary mechanism of the central stalk subunits to proton translocation. Component of the F(0) channel, it forms part of the peripheral stalk, linking F(1) to F(0). The polypeptide is ATP synthase subunit b (Mycoplasma mycoides subsp. mycoides SC (strain CCUG 32753 / NCTC 10114 / PG1)).